Consider the following 201-residue polypeptide: Small ribosomal subunit protein uS4 (201 aa).

In terms of domain architecture, S4 RNA-binding spans 92-155; the sequence is RRLDAVVYAL…QKLDIIQESV (64 aa).

It belongs to the universal ribosomal protein uS4 family. As to quaternary structure, part of the 30S ribosomal subunit. Contacts protein S5. The interaction surface between S4 and S5 is involved in control of translational fidelity.

One of the primary rRNA binding proteins, it binds directly to 16S rRNA where it nucleates assembly of the body of the 30S subunit. Its function is as follows. With S5 and S12 plays an important role in translational accuracy. This is Small ribosomal subunit protein uS4 from Staphylococcus carnosus (strain TM300).